Reading from the N-terminus, the 554-residue chain is U4/U6 small nuclear ribonucleoprotein PRP4-like protein (554 aa).

The segment covering 48–65 (APIPMMPHPPVARPPTFR) has biased composition (pro residues). Residues 48-99 (APIPMMPHPPVARPPTFRPPVSQNGGVKTSDSDSESDDEHIEISEESKQVRE) form a disordered region. Basic and acidic residues predominate over residues 88-99 (IEISEESKQVRE). 7 WD repeats span residues 253-292 (GDDR…NTIA), 296-335 (DHKE…LQTF), 337-376 (GHLD…ELLL), 379-418 (GHSR…SILV), 421-460 (GHIK…SLYI), 463-503 (AHAN…LVKS), and 506-545 (GHES…DEDE).

The protein localises to the nucleus speckle. In terms of biological role, participates in pre-mRNA splicing. Part of the U4/U5/U6 tri-snRNP complex, one of the building blocks of the spliceosome. Essential for reproduction. In female gametophyte, is necessary for the egg cell and central cell fate determination and hence reproductive success. Involved in a mechanism that prevents accessory cells from adopting gametic cell fate. Modulates egg cell signaling center that regulates the development of all female gametophytic cells. This is U4/U6 small nuclear ribonucleoprotein PRP4-like protein from Arabidopsis thaliana (Mouse-ear cress).